The following is a 416-amino-acid chain: Enolase (416 aa).

Residue Gln-160 participates in (2R)-2-phosphoglycerate binding. Residue Glu-204 is the Proton donor of the active site. Mg(2+) contacts are provided by Asp-239, Glu-280, and Asp-306. 4 residues coordinate (2R)-2-phosphoglycerate: Lys-331, Arg-360, Ser-361, and Lys-382. Residue Lys-331 is the Proton acceptor of the active site.

Belongs to the enolase family. It depends on Mg(2+) as a cofactor.

Its subcellular location is the cytoplasm. It localises to the secreted. It is found in the cell surface. It carries out the reaction (2R)-2-phosphoglycerate = phosphoenolpyruvate + H2O. It functions in the pathway carbohydrate degradation; glycolysis; pyruvate from D-glyceraldehyde 3-phosphate: step 4/5. Functionally, catalyzes the reversible conversion of 2-phosphoglycerate (2-PG) into phosphoenolpyruvate (PEP). It is essential for the degradation of carbohydrates via glycolysis. The chain is Enolase from Sulfolobus acidocaldarius (strain ATCC 33909 / DSM 639 / JCM 8929 / NBRC 15157 / NCIMB 11770).